A 428-amino-acid chain; its full sequence is Lupus La protein homolog A (428 aa).

In terms of domain architecture, HTH La-type RNA-binding spans 7-99; that stretch reads KEQKLDSDTK…RRSPAKPLPE (93 aa). Positions 111 to 203 constitute an RRM domain; sequence KSVYIKGFPT…EERKLNKSEE (93 aa). Disordered stretches follow at residues 187–223 and 323–428; these read EYHA…DAER and QESF…VGDQ. Short sequence motifs (nuclear localization signal) lie at residues 196–212 and 316–332; these read RKLN…QVKK and KKIL…RKGR. The 123-residue stretch at 227-349 folds into the xRRM domain; it reads EERVGSLLKF…KGRGGKGNDS (123 aa). Composition is skewed to basic residues over residues 328 to 343 and 352 to 361; these read KRKG…KGRG and RKRTQFQGKK. The segment covering 366-377 has biased composition (acidic residues); that stretch reads SSDDEDDMEESE. Residues 406–428 are compositionally biased toward basic and acidic residues; it reads RSLDDKAEDGPAVKQSKTEVGDQ.

In terms of processing, phosphorylated.

The protein localises to the nucleus. Functionally, la protein plays a role in the transcription of RNA polymerase III. It is most probably a transcription termination factor. Binds to the 3' termini of virtually all nascent polymerase III transcripts. This Xenopus laevis (African clawed frog) protein is Lupus La protein homolog A (ssb-a).